A 147-amino-acid chain; its full sequence is Ubiquitin-conjugating enzyme E2 4 (147 aa).

Positions 1 to 147 (MSLKRINKEL…AKEWTKKYAV (147 aa)) constitute a UBC core domain. Residue cysteine 85 is the Glycyl thioester intermediate of the active site.

It belongs to the ubiquitin-conjugating enzyme family.

The catalysed reaction is S-ubiquitinyl-[E1 ubiquitin-activating enzyme]-L-cysteine + [E2 ubiquitin-conjugating enzyme]-L-cysteine = [E1 ubiquitin-activating enzyme]-L-cysteine + S-ubiquitinyl-[E2 ubiquitin-conjugating enzyme]-L-cysteine.. The protein operates within protein modification; protein ubiquitination. In terms of biological role, E2 ubiquitin-conjugating enzyme that catalyzes the covalent attachment of ubiquitin to other proteins. Mediates the selective degradation of short-lived and abnormal proteins. Mediates ubiquitination of PEX5. The chain is Ubiquitin-conjugating enzyme E2 4 (UBC4) from Candida albicans (Yeast).